The primary structure comprises 292 residues: NAD kinase (292 aa).

Catalysis depends on aspartate 73, which acts as the Proton acceptor. NAD(+)-binding positions include 73-74 (DG), 147-148 (NE), histidine 158, arginine 175, aspartate 177, 188-193 (TAYSLS), and glutamine 247.

This sequence belongs to the NAD kinase family. The cofactor is a divalent metal cation.

It is found in the cytoplasm. It catalyses the reaction NAD(+) + ATP = ADP + NADP(+) + H(+). In terms of biological role, involved in the regulation of the intracellular balance of NAD and NADP, and is a key enzyme in the biosynthesis of NADP. Catalyzes specifically the phosphorylation on 2'-hydroxyl of the adenosine moiety of NAD to yield NADP. The sequence is that of NAD kinase from Salmonella agona (strain SL483).